The chain runs to 119 residues: Large ribosomal subunit protein bL20 (119 aa).

The protein belongs to the bacterial ribosomal protein bL20 family.

In terms of biological role, binds directly to 23S ribosomal RNA and is necessary for the in vitro assembly process of the 50S ribosomal subunit. It is not involved in the protein synthesizing functions of that subunit. The polypeptide is Large ribosomal subunit protein bL20 (Caldicellulosiruptor bescii (strain ATCC BAA-1888 / DSM 6725 / KCTC 15123 / Z-1320) (Anaerocellum thermophilum)).